Consider the following 100-residue polypeptide: Urease subunit gamma (100 aa).

The protein belongs to the urease gamma subunit family. Heterotrimer of UreA (gamma), UreB (beta) and UreC (alpha) subunits. Three heterotrimers associate to form the active enzyme.

It is found in the cytoplasm. It catalyses the reaction urea + 2 H2O + H(+) = hydrogencarbonate + 2 NH4(+). The protein operates within nitrogen metabolism; urea degradation; CO(2) and NH(3) from urea (urease route): step 1/1. The chain is Urease subunit gamma from Ruegeria sp. (strain TM1040) (Silicibacter sp.).